The chain runs to 200 residues: Pyridoxal 5'-phosphate synthase subunit PdxT (200 aa).

52-54 (GES) contributes to the L-glutamine binding site. The active-site Nucleophile is the Cys84. L-glutamine is bound by residues Arg116 and 145-146 (IR). Catalysis depends on charge relay system residues His181 and Glu183.

The protein belongs to the glutaminase PdxT/SNO family. In the presence of PdxS, forms a dodecamer of heterodimers. Only shows activity in the heterodimer.

It catalyses the reaction aldehydo-D-ribose 5-phosphate + D-glyceraldehyde 3-phosphate + L-glutamine = pyridoxal 5'-phosphate + L-glutamate + phosphate + 3 H2O + H(+). It carries out the reaction L-glutamine + H2O = L-glutamate + NH4(+). The protein operates within cofactor biosynthesis; pyridoxal 5'-phosphate biosynthesis. Functionally, catalyzes the hydrolysis of glutamine to glutamate and ammonia as part of the biosynthesis of pyridoxal 5'-phosphate. The resulting ammonia molecule is channeled to the active site of PdxS. In Sulfurisphaera tokodaii (strain DSM 16993 / JCM 10545 / NBRC 100140 / 7) (Sulfolobus tokodaii), this protein is Pyridoxal 5'-phosphate synthase subunit PdxT.